The sequence spans 129 residues: Fluoride-specific ion channel FluC (129 aa).

A run of 4 helical transmembrane segments spans residues 4–24, 32–52, 69–89, and 105–125; these read LFVA…SGLI, FPWG…AFAT, FFMV…LQTL, and VLSV…AVLI. Positions 76 and 79 each coordinate Na(+).

This sequence belongs to the fluoride channel Fluc/FEX (TC 1.A.43) family.

The protein localises to the cell inner membrane. The catalysed reaction is fluoride(in) = fluoride(out). With respect to regulation, na(+) is not transported, but it plays an essential structural role and its presence is essential for fluoride channel function. Functionally, fluoride-specific ion channel. Important for reducing fluoride concentration in the cell, thus reducing its toxicity. In Rhodospirillum rubrum (strain ATCC 11170 / ATH 1.1.1 / DSM 467 / LMG 4362 / NCIMB 8255 / S1), this protein is Fluoride-specific ion channel FluC.